The primary structure comprises 313 residues: Ribosomal RNA small subunit methyltransferase H (313 aa).

Residues 35-37 (GGH), Asp55, Phe79, Asp101, and Gln108 each bind S-adenosyl-L-methionine.

It belongs to the methyltransferase superfamily. RsmH family.

It localises to the cytoplasm. The enzyme catalyses cytidine(1402) in 16S rRNA + S-adenosyl-L-methionine = N(4)-methylcytidine(1402) in 16S rRNA + S-adenosyl-L-homocysteine + H(+). Specifically methylates the N4 position of cytidine in position 1402 (C1402) of 16S rRNA. The protein is Ribosomal RNA small subunit methyltransferase H of Shigella flexneri.